A 401-amino-acid polypeptide reads, in one-letter code: S-adenosylmethionine synthase (401 aa).

137 to 142 is an ATP binding site; that stretch reads GQGSGD.

The protein belongs to the AdoMet synthase 2 family. The cofactor is Mg(2+).

The catalysed reaction is L-methionine + ATP + H2O = S-adenosyl-L-methionine + phosphate + diphosphate. The protein operates within amino-acid biosynthesis; S-adenosyl-L-methionine biosynthesis; S-adenosyl-L-methionine from L-methionine: step 1/1. In terms of biological role, catalyzes the formation of S-adenosylmethionine from methionine and ATP. The chain is S-adenosylmethionine synthase from Haloquadratum walsbyi (strain DSM 16790 / HBSQ001).